The following is a 421-amino-acid chain: Subtilisin-like protease 2 (421 aa).

The first 16 residues, 1 to 16 (MQLLNFGLLLLPFVAG), serve as a signal peptide directing secretion. The propeptide occupies 17 to 122 (DLAPQPEPLL…VHPDQHVYLA (106 aa)). Residues 36–122 (QYIVTLKEGL…VHPDQHVYLA (87 aa)) form the Inhibitor I9 domain. The Peptidase S8 domain maps to 131–421 (RWGLGYMSSK…ERKFTLPKYF (291 aa)). Active-site charge relay system residues include aspartate 169 and histidine 201. Asparagine 248, asparagine 261, and asparagine 348 each carry an N-linked (GlcNAc...) asparagine glycan. Serine 357 acts as the Charge relay system in catalysis. N-linked (GlcNAc...) asparagine glycosylation is present at asparagine 388.

The protein belongs to the peptidase S8 family.

The protein localises to the secreted. In terms of biological role, secreted subtilisin-like serine protease with keratinolytic activity that contributes to pathogenicity. This Trichophyton equinum (Horse ringworm fungus) protein is Subtilisin-like protease 2 (SUB2).